We begin with the raw amino-acid sequence, 331 residues long: ESX-3 secretion system protein EccE3 (331 aa).

Helical transmembrane passes span 11–31 (GRVT…PWQS) and 37–57 (LLGV…GLYF).

Belongs to the EccE family. As to quaternary structure, part of the ESX-3 / type VII secretion system (T7SS), which is composed of cytosolic and membrane components. The ESX-3 membrane complex is composed of EccB3, EccC3, EccD3 and EccE3.

It is found in the cell inner membrane. Its function is as follows. Part of the ESX-3 specialized secretion system, which is important for iron and zinc uptake or homeostasis. The protein is ESX-3 secretion system protein EccE3 of Mycobacterium tuberculosis (strain ATCC 25618 / H37Rv).